The primary structure comprises 113 residues: uncharacterized protein (113 aa).

The helical transmembrane segment at 4-26 (VLFKIAVALLYLLSFFLHRLHLR) threads the bilayer. The interval 32–74 (RRRRRRHHRRHHRRHHHHRRRRRRRRRRRRRHHRHHHHRHRRR) is disordered.

It is found in the membrane. This is an uncharacterized protein from Saccharomyces cerevisiae (strain ATCC 204508 / S288c) (Baker's yeast).